The primary structure comprises 89 residues: Small ribosomal subunit protein uS14 (89 aa).

This sequence belongs to the universal ribosomal protein uS14 family. As to quaternary structure, part of the 30S ribosomal subunit. Contacts proteins S3 and S10.

Its function is as follows. Binds 16S rRNA, required for the assembly of 30S particles and may also be responsible for determining the conformation of the 16S rRNA at the A site. This is Small ribosomal subunit protein uS14 from Chlorobium luteolum (strain DSM 273 / BCRC 81028 / 2530) (Pelodictyon luteolum).